A 124-amino-acid chain; its full sequence is MQNDQDYGNKLNPAWDEKGLITAVLTDAKTGLLLMVAHMNKESFELSMATKEATFWSRSRKKIWRKGEESGHVMKIQEIRIDCDQDTLWLKVIPMGPACHTGAQSCFYRLVEDGHLVTIPKDKI.

Asp82 lines the Mg(2+) pocket. Cys83 provides a ligand contact to Zn(2+). Positions 84 and 86 each coordinate Mg(2+). 2 residues coordinate Zn(2+): Cys99 and Cys106.

It belongs to the PRA-CH family. Homodimer. Requires Mg(2+) as cofactor. Zn(2+) serves as cofactor.

The protein resides in the cytoplasm. The enzyme catalyses 1-(5-phospho-beta-D-ribosyl)-5'-AMP + H2O = 1-(5-phospho-beta-D-ribosyl)-5-[(5-phospho-beta-D-ribosylamino)methylideneamino]imidazole-4-carboxamide. It participates in amino-acid biosynthesis; L-histidine biosynthesis; L-histidine from 5-phospho-alpha-D-ribose 1-diphosphate: step 3/9. Functionally, catalyzes the hydrolysis of the adenine ring of phosphoribosyl-AMP. In Zymomonas mobilis subsp. mobilis (strain ATCC 31821 / ZM4 / CP4), this protein is Phosphoribosyl-AMP cyclohydrolase.